Reading from the N-terminus, the 2517-residue chain is Protein capicua homolog (2517 aa).

6 disordered regions span residues 1–197 (MKPM…SGSY), 300–325 (LSPG…HREP), 342–483 (PWEP…KYKK), 531–579 (EMEG…RGDS), 608–640 (SSRS…FGFR), and 658–767 (VRSR…FRAV). Acidic residues predominate over residues 57 to 67 (EEAEEGEEEEA). Positions 91-101 (EDPKGDGEAGR) are enriched in basic and acidic residues. Low complexity-rich tracts occupy residues 158 to 167 (TSTRSSSTDT) and 300 to 313 (LSPG…LPGS). Positions 396–405 (HCEEGEEKHP) are enriched in basic and acidic residues. Residues 414-428 (LPLPPPQLLSPPPKS) show a composition bias toward pro residues. Residues 451-477 (GSRSSSVASLEKGTAPAARARTPLTAA) are compositionally biased toward low complexity. The segment covering 608 to 619 (SSRSGTPSFSPV) has biased composition (polar residues). Over residues 677 to 686 (DLGPHPPPPA) the composition is skewed to pro residues. A compositionally biased stretch (polar residues) spans 698–707 (TFQTNLTFTV). A compositionally biased stretch (gly residues) spans 726–735 (GAPGAGGGGA). A phosphoserine mark is found at S776 and S780. Disordered stretches follow at residues 812–842 (IVRN…PGRG), 955–1110 (PSQP…DHIR), 1179–1220 (CNKD…APGV), 1235–1274 (SDTK…SLDG), 1290–1347 (SGPA…TSDE), 1379–1539 (RVTD…ILQT), and 1595–1628 (IASK…RVPG). Residues 937–955 (EPRSVAVFPWHSLVPFLAP) are interaction with ATXN1. The span at 959-981 (DPSVQPSEAQQPASHPVASNQSK) shows a compositional bias: polar residues. 2 positions are modified to phosphoserine: S1055 and S1082. Composition is skewed to basic and acidic residues over residues 1087-1110 (PKER…DHIR), 1179-1188 (CNKDRKKSSS), and 1200-1209 (GHKETRERSM). R1099 is subject to Omega-N-methylarginine. The segment at residues 1109-1177 (IRRPMNAFMI…AHFKAHPDWK (69 aa)) is a DNA-binding region (HMG box). A Phosphoserine modification is found at S1186. Residues 1235 to 1245 (SDTKAPGSSSC) are compositionally biased toward polar residues. A Phosphoserine modification is found at S1271. The segment covering 1305–1323 (GAPGPFAAPGEGGALAATG) has biased composition (low complexity). Phosphoserine is present on residues S1340, S1345, and S1405. Over residues 1418-1430 (PLDPEPPGPPDPP) the composition is skewed to pro residues. A compositionally biased stretch (low complexity) spans 1439–1456 (SAPSSSASSPASSSASAA). The segment covering 1457 to 1474 (TSFSLGSGTFKAQESGQG) has biased composition (polar residues). Phosphoserine occurs at positions 1609, 1630, and 1648. At R1772 the chain carries Asymmetric dimethylarginine. Residues 1799-1818 (QSVPSAPPPKAQSVSPVQAP) form a disordered region. R1843 carries the omega-N-methylarginine modification. Disordered stretches follow at residues 2039–2064 (AATI…FPSA), 2100–2342 (SFEA…AKCE), and 2430–2517 (AATP…ATGR). Residues 2051-2064 (ATATPAPTSPFPSA) are compositionally biased toward low complexity. 2 stretches are compositionally biased toward pro residues: residues 2110-2119 (GPAPRQPLEP) and 2136-2145 (PTPPAPPPLP). A compositionally biased stretch (low complexity) spans 2146–2155 (ETWTPTARSS). Residue K2177 is modified to N6-acetyllysine. The segment covering 2198-2209 (PPTPPSPAPAPA) has biased composition (pro residues). Phosphothreonine is present on T2200. Phosphoserine is present on S2203. Residues 2210–2225 (VAPGGSSESSSGRAAG) show a composition bias toward low complexity. Basic and acidic residues predominate over residues 2249-2278 (KTFDSVDNRVLSEVDFEERFAELPEFRPEE). Phosphoserine occurs at positions 2260, 2282, 2287, 2291, 2298, and 2306. T2307 is subject to Phosphothreonine. S2311 and S2318 each carry phosphoserine. A compositionally biased stretch (pro residues) spans 2457–2469 (APTPSPAGGPDPT). A Phosphoserine modification is found at S2504.

As to quaternary structure, found in a complex with ATXN1 and ATXN1L. In terms of assembly, interacts with ATXN1. In terms of tissue distribution, expressed in fetal brain.

The protein localises to the nucleus. Its function is as follows. Transcriptional repressor which plays a role in development of the central nervous system (CNS). In concert with ATXN1 and ATXN1L, involved in brain development. In Homo sapiens (Human), this protein is Protein capicua homolog (CIC).